A 429-amino-acid chain; its full sequence is Kynureninase (429 aa).

Pyridoxal 5'-phosphate-binding positions include Leu109, Thr110, 137–140 (FPSD), Asp222, His225, and Tyr247. Lys248 is modified (N6-(pyridoxal phosphate)lysine). The pyridoxal 5'-phosphate site is built by Trp278 and Asn306.

Belongs to the kynureninase family. Homodimer. Pyridoxal 5'-phosphate is required as a cofactor.

The enzyme catalyses L-kynurenine + H2O = anthranilate + L-alanine + H(+). It catalyses the reaction 3-hydroxy-L-kynurenine + H2O = 3-hydroxyanthranilate + L-alanine + H(+). It participates in amino-acid degradation; L-kynurenine degradation; L-alanine and anthranilate from L-kynurenine: step 1/1. It functions in the pathway cofactor biosynthesis; NAD(+) biosynthesis; quinolinate from L-kynurenine: step 2/3. Functionally, catalyzes the cleavage of L-kynurenine (L-Kyn) and L-3-hydroxykynurenine (L-3OHKyn) into anthranilic acid (AA) and 3-hydroxyanthranilic acid (3-OHAA), respectively. The sequence is that of Kynureninase from Salinispora tropica (strain ATCC BAA-916 / DSM 44818 / JCM 13857 / NBRC 105044 / CNB-440).